The chain runs to 142 residues: MKYLGLALISAVFLIGTCQAETPSQKCEEKYKENAERKACIHHCKYQYYGFIDVNYNIAQPEIRKFSNVLMDYGVVDRSKKRELKKVMHDCAKKIKKEARTGDHWLNCRTSIDYYRCVLTSKLIGPQRFDKAIQDYDKTISV.

Residues 1 to 20 form the signal peptide; that stretch reads MKYLGLALISAVFLIGTCQA. Cystine bridges form between Cys27/Cys44, Cys40/Cys108, and Cys91/Cys117.

The protein belongs to the PBP/GOBP family. As to expression, female salivary gland.

The protein resides in the secreted. In terms of biological role, inhibits contact coagulation pathway activation in the host by sequestering anionic polymers, such as dextran sulfate and heparin, and thus blocking interaction of protein components of the pathway with negatively charged surfaces. Inhibits dextran sulfate-mediated autoactivation of host coagulation factor XII (F12). Inhibits dextran sulfate-mediated activation of host factor XI (F11) by activated F12. Inhibits polyphosphate-induced plasma extravasation at the injection site in mouse model, probably via inhibition of bradykinin generation in host skin. This Phlebotomus duboscqi (Sandfly) protein is Salivary protein 15b.